Reading from the N-terminus, the 333-residue chain is Probable G-protein coupled receptor 174 (333 aa).

Topologically, residues Met1–Thr27 are extracellular. A glycan (N-linked (GlcNAc...) asparagine) is linked at Asn4. A helical transmembrane segment spans residues Val28 to Met48. The Cytoplasmic portion of the chain corresponds to Lys49–Arg53. Residues Ala54–Leu74 traverse the membrane as a helical segment. Residues Arg75–Cys91 are Extracellular-facing. Residues Cys91 and Cys168 are joined by a disulfide bond. Residues Met92–Ile112 form a helical membrane-spanning segment. At Ser113–Asp134 the chain is on the cytoplasmic side. Residues Leu135–Leu155 form a helical membrane-spanning segment. Topologically, residues Arg156–Ser182 are extracellular. An N-linked (GlcNAc...) asparagine glycan is attached at Asn164. The chain crosses the membrane as a helical span at residues Val183 to Tyr203. Residues Cys204–Met231 lie on the Cytoplasmic side of the membrane. The chain crosses the membrane as a helical span at residues Ile232 to Leu252. Residues Asp253 to Val269 are Extracellular-facing. A helical transmembrane segment spans residues Ile270 to Val290. Topologically, residues Ile291–Cys333 are cytoplasmic.

This sequence belongs to the G-protein coupled receptor 1 family. Interacts with GNA13. Interacts with CCL21.

The protein resides in the cell membrane. In terms of biological role, G-protein-coupled receptor of lysophosphatidylserine (LysoPS) that plays different roles in immune response. Plays a negative role in regulatory T-cell accumulation and homeostasis. Under inflammatory conditions where LysoPS production increases, contributes to the down-regulation of regulatory T-cell activity to favor effector response. Mediates the suppression of IL-2 production in activated T-lymphocytes leading to inhibition of growth, proliferation and differentiation of T-cells. Mechanistically, acts via G(s)-containing heterotrimeric G proteins to trigger elevated cyclic AMP levels and protein kinase A/PKA activity, which may in turn act to antagonize proximal TCR signaling. Plays an important role in the initial period of sepsis through the regulation of macrophage polarization and pro- and anti-inflammatory cytokine secretions. Upon testosterone treatment, acts as a receptor for CCL21 and subsequently triggers through G(q)-alpha and G(12)/G(13) proteins a calcium flux leading to chemotactic effects on activated B-cells. Signals via GNA13 and PKA to promote CD86 up-regulation by follicular B-cells. This is Probable G-protein coupled receptor 174 (GPR174) from Homo sapiens (Human).